The sequence spans 135 residues: Large ribosomal subunit protein uL16c (135 aa).

This sequence belongs to the universal ribosomal protein uL16 family. As to quaternary structure, part of the 50S ribosomal subunit.

It is found in the plastid. The protein localises to the chloroplast. This Stigeoclonium helveticum (Green alga) protein is Large ribosomal subunit protein uL16c.